Consider the following 259-residue polypeptide: MLLKIAHLVGKHTIKFAQSVGIFSLFSFIAISSIIKPPLYLSLIIRQLLFIGFHSLPVVAMTTFFSGAVLALQSYTGFSRFSAENSIATVVVLSLTRELGPVLAGLIVAGRVGASIAAEIATMRVTEQVDALYTLSTDPIKYLVCPRVIAAIITMPCLVLIGDIIGVMGGYLVGIYKLDFNSTAYLTSTFQYLEPIDVISGLIKATVFGFIISIISCYSGYYSGKGAKGVGRATTSAVVNSSILILISNYLITELFFKV.

5 helical membrane-spanning segments follow: residues 13-35 (TIKF…SSII), 49-69 (LFIG…SGAV), 148-168 (VIAA…IGVM), 195-215 (PIDV…ISII), and 237-257 (AVVN…ELFF).

This sequence belongs to the MlaE permease family.

Its subcellular location is the cell inner membrane. Could be part of an ABC transporter complex. The chain is Probable ABC transporter permease protein RP096 from Rickettsia prowazekii (strain Madrid E).